The following is a 118-amino-acid chain: Aspartate 1-decarboxylase (118 aa).

S25 serves as the catalytic Schiff-base intermediate with substrate; via pyruvic acid. A Pyruvic acid (Ser) modification is found at S25. T57 is a substrate binding site. Residue Y58 is the Proton donor of the active site. 73–75 (GAA) provides a ligand contact to substrate.

The protein belongs to the PanD family. In terms of assembly, heterooctamer of four alpha and four beta subunits. Pyruvate is required as a cofactor. Post-translationally, is synthesized initially as an inactive proenzyme, which is activated by self-cleavage at a specific serine bond to produce a beta-subunit with a hydroxyl group at its C-terminus and an alpha-subunit with a pyruvoyl group at its N-terminus.

The protein localises to the cytoplasm. The catalysed reaction is L-aspartate + H(+) = beta-alanine + CO2. It functions in the pathway cofactor biosynthesis; (R)-pantothenate biosynthesis; beta-alanine from L-aspartate: step 1/1. Functionally, catalyzes the pyruvoyl-dependent decarboxylation of aspartate to produce beta-alanine. The sequence is that of Aspartate 1-decarboxylase from Porphyromonas gingivalis (strain ATCC 33277 / DSM 20709 / CIP 103683 / JCM 12257 / NCTC 11834 / 2561).